The primary structure comprises 456 residues: Glycerol-3-phosphate dehydrogenase [NAD(+)] At3g07690, cytosolic (456 aa).

Residues 41-46 (GAGAWG), Lys189, and Ala228 contribute to the NAD(+) site. Position 189 (Lys189) interacts with substrate. The active-site Proton acceptor is Lys278. The NAD(+) site is built by Arg340 and Gln368. 340–341 (RN) is a binding site for substrate.

The protein belongs to the NAD-dependent glycerol-3-phosphate dehydrogenase family. As to quaternary structure, homodimer.

It is found in the cytoplasm. The catalysed reaction is sn-glycerol 3-phosphate + NAD(+) = dihydroxyacetone phosphate + NADH + H(+). Its function is as follows. Required for glycerol-3-phosphate (G3P) accumulation during systemic acquired resistance (SAR) establishment. The polypeptide is Glycerol-3-phosphate dehydrogenase [NAD(+)] At3g07690, cytosolic (Arabidopsis thaliana (Mouse-ear cress)).